The following is a 387-amino-acid chain: SLC2A4 regulator (387 aa).

Disordered regions lie at residues 1-97 (MERP…RATP) and 139-179 (EALV…PPEA). Residues 27–36 (GPGPRAAPVT) show a composition bias toward low complexity. Residues 200–225 (FQCLWKSCGKVLSTASAMQRHIRLVH) form a C2H2-type zinc finger. The Nuclear export signal signature appears at 253–263 (LTDGLSSLTPV). Residues Ser264 and Ser268 each carry the phosphoserine modification. The segment at 283–305 (EPPALPSPLRPPAPPLPPPPVLS) is disordered. Over residues 285–303 (PALPSPLRPPAPPLPPPPV) the composition is skewed to pro residues. A Nuclear localization signal motif is present at residues 351-354 (RKPR).

Interacts with MEF2A. In terms of tissue distribution, according to PubMed:14630949, expressed in heart, skeletal muscle, liver, kidney and pancreas; undetectable in lung, placenta or brain. According to PubMed:14625278, ubiquitously expressed, with lowest expression in brain and ileum.

It localises to the cytoplasm. The protein localises to the nucleus. Transcription factor involved in SLC2A4 and HD gene transactivation. Binds to the consensus sequence 5'-GCCGGCG-3'. This chain is SLC2A4 regulator (SLC2A4RG), found in Homo sapiens (Human).